Consider the following 314-residue polypeptide: Hydroxyethylthiazole kinase (314 aa).

Position 70 (methionine 70) interacts with substrate. Positions 145 and 217 each coordinate ATP. A substrate-binding site is contributed by glycine 244.

The protein belongs to the Thz kinase family. Requires Mg(2+) as cofactor.

It catalyses the reaction 5-(2-hydroxyethyl)-4-methylthiazole + ATP = 4-methyl-5-(2-phosphooxyethyl)-thiazole + ADP + H(+). The protein operates within cofactor biosynthesis; thiamine diphosphate biosynthesis; 4-methyl-5-(2-phosphoethyl)-thiazole from 5-(2-hydroxyethyl)-4-methylthiazole: step 1/1. Functionally, catalyzes the phosphorylation of the hydroxyl group of 4-methyl-5-beta-hydroxyethylthiazole (THZ). The polypeptide is Hydroxyethylthiazole kinase (Bifidobacterium longum (strain DJO10A)).